A 584-amino-acid chain; its full sequence is Pescadillo homolog (584 aa).

Positions 1 to 54 are required for 28S ribosomal RNA processing; the sequence is MGGLEKKKYERGSATNYITRNKARKKLQLSLPDFRRLCILKGIYPHEPKHKKKV. Residues 1-257 are sufficient for nucleolar localization; it reads MGGLEKKKYE…PKLEGQAQAE (257 aa). K98 bears the N6-acetyllysine mark. Residues 312–414 are sufficient for interaction with MAP1B; it reads RKKELEAQEK…LLLPVAEYFP (103 aa). Residues 321–414 enclose the BRCT domain; that stretch reads KHKKLFEGLK…LLLPVAEYFP (94 aa). Positions 449 to 510 are disordered; that stretch reads DPGHLEEEEE…EEKKPQVMAG (62 aa). Acidic residues predominate over residues 454–489; sequence EEEEEEDEDDDNEGDVAAENEEEDVEVESEEEEEEE. Over residues 496 to 505 the composition is skewed to basic and acidic residues; sequence EQHRLEEKKP. Residue K513 forms a Glycyl lysine isopeptide (Lys-Gly) (interchain with G-Cter in SUMO1); alternate linkage. K513 is covalently cross-linked (Glycyl lysine isopeptide (Lys-Gly) (interchain with G-Cter in SUMO2); alternate). A required for 28S ribosomal RNA processing region spans residues 535 to 584; it reads MMKKREKYLYQKIMFGKRRKIREANKLAEKRKAHDDAVRSEKKAKRTRPV. The span at 560–575 shows a compositional bias: basic and acidic residues; the sequence is KLAEKRKAHDDAVRSE. Residues 560–584 are disordered; it reads KLAEKRKAHDDAVRSEKKAKRTRPV.

Belongs to the pescadillo family. Component of the PeBoW complex, composed of BOP1, PES1 and WDR12. The complex is held together by BOP1, which interacts with PES1 via its N-terminal domain and with WDR12 via a high-affinity interaction between the seven-bladed beta-propeller domains of the 2 proteins. The PeBoW complex associates with the 66S pre-ribosome. The PeBoW complex also associates with DDX27, PES1 interacts directly with DDX27. Interacts with IRS1 and UBTF. May interact with MAP1B. Post-translationally, sumoylated. In terms of tissue distribution, ubiquitous. Highest levels appear to be found in tissues that contain a population of proliferating cells, such as ovary and testis. Also appears to be highly expressed in kidney and liver. In the brain expression is restricted to neural progenitor cells and postmitotic neurons. Highly expressed in malignant astrocytes.

The protein resides in the nucleus. The protein localises to the nucleolus. Its subcellular location is the nucleoplasm. It localises to the chromosome. Functionally, component of the PeBoW complex, which is required for maturation of 28S and 5.8S ribosomal RNAs and formation of the 60S ribosome. The protein is Pescadillo homolog (Pes1) of Mus musculus (Mouse).